The sequence spans 137 residues: NADPH-dependent 7-cyano-7-deazaguanine reductase (137 aa).

The Thioimide intermediate role is filled by Cys-51. The active-site Proton donor is Asp-58. Residues 73–75 (VEL) and 92–93 (HE) contribute to the substrate site.

It belongs to the GTP cyclohydrolase I family. QueF type 1 subfamily.

The protein resides in the cytoplasm. It carries out the reaction 7-aminomethyl-7-carbaguanine + 2 NADP(+) = 7-cyano-7-deazaguanine + 2 NADPH + 3 H(+). The protein operates within tRNA modification; tRNA-queuosine biosynthesis. Its function is as follows. Catalyzes the NADPH-dependent reduction of 7-cyano-7-deazaguanine (preQ0) to 7-aminomethyl-7-deazaguanine (preQ1). In Gloeobacter violaceus (strain ATCC 29082 / PCC 7421), this protein is NADPH-dependent 7-cyano-7-deazaguanine reductase.